The primary structure comprises 692 residues: Elongation factor G (692 aa).

Residues 8–282 (ENTRNIGIMA…GVVDYLPSPL (275 aa)) enclose the tr-type G domain. GTP is bound by residues 17–24 (AHIDAGKT), 81–85 (DTPGH), and 135–138 (NKMD).

This sequence belongs to the TRAFAC class translation factor GTPase superfamily. Classic translation factor GTPase family. EF-G/EF-2 subfamily.

The protein localises to the cytoplasm. In terms of biological role, catalyzes the GTP-dependent ribosomal translocation step during translation elongation. During this step, the ribosome changes from the pre-translocational (PRE) to the post-translocational (POST) state as the newly formed A-site-bound peptidyl-tRNA and P-site-bound deacylated tRNA move to the P and E sites, respectively. Catalyzes the coordinated movement of the two tRNA molecules, the mRNA and conformational changes in the ribosome. The protein is Elongation factor G of Geobacillus thermodenitrificans (strain NG80-2).